Consider the following 506-residue polypeptide: Voltage-gated potassium channel regulatory subunit KCNG4 (506 aa).

Residues 1 to 216 (MPMSSRDRDL…EMVEDPQSGL (216 aa)) lie on the Cytoplasmic side of the membrane. Residues 217–238 (PGKVFACLSVLFVATTAVSLCV) traverse the membrane as a helical segment. The Extracellular portion of the chain corresponds to 239–259 (STMPDFRAEEGKGECTRKCYY). A helical membrane pass occupies residues 260-281 (IFVVESICVAWFSLEFCLRFVQ). Residues 282-292 (APNKCQFFRGP) are Cytoplasmic-facing. A helical membrane pass occupies residues 293 to 312 (LNVIDILAISPYYVSLAVSD). The Extracellular segment spans residues 313–326 (ESPEAGERPSSSSY). Residues 327–351 (LEKVGLVLRVLRALRILYVMRLARH) traverse the membrane as a helical; Voltage-sensor segment. Topologically, residues 352 to 366 (SLGLQTLGLTVRRCA) are cytoplasmic. Residues 367 to 388 (REFGLLMLFLAVAVTLFSPLVY) form a helical membrane-spanning segment. Residues 389 to 403 (VAENESGRVLEFTSI) are Extracellular-facing. The helical intramembrane region spans 404 to 415 (PASYWWAIISMT). Positions 416–421 (TVGYGD) match the Selectivity filter motif. The stretch at 416 to 423 (TVGYGDMV) is an intramembrane region. Topologically, residues 424-430 (PRSVPGQ) are extracellular. A helical membrane pass occupies residues 431-459 (MVALSSILSGILIMAFPATSIFHTFSHSY). Residues 460-506 (LELKREQEQVQARLRRLQNTNSASERELLSDVDDLVPEGLTSPGRYM) lie on the Cytoplasmic side of the membrane.

The protein belongs to the potassium channel family. G (TC 1.A.1.2) subfamily. Kv6.4/KCNG4 sub-subfamily. In terms of assembly, heterotetramer with KCNB1. Does not form homomultimer.

It localises to the cell membrane. Its function is as follows. Regulatory subunit of the voltage-gated potassium (Kv) channel which, when coassembled with KCNB1, modulates the kinetics parameters of the heterotetrameric channel namely the time course of activation, deactivation and inactivation and on the voltage-dependence of activation. Potassium channel subunit that does not form functional channels by itself. Reduces the deactivation rate. Modulates the threshold for activation by shifting by approximately 20 mV in hyperpolarizing direction. Markedly changes the inactivation by shifting the voltage dependence of inactivation by approximately 40 mV in hyperpolarizing direction. Acceleratee activation and enhances the time course of activation. The sequence is that of Voltage-gated potassium channel regulatory subunit KCNG4 from Mus musculus (Mouse).